Consider the following 260-residue polypeptide: Resolvase (260 aa).

One can recognise a Tyr recombinase domain in the interval 38-241 (ELPKYLLAPE…FALDVAARHR (204 aa)). Residues Arg-73, Lys-105, His-193, Arg-196, and His-219 contribute to the active site. The active-site O-(3'-phospho-DNA)-tyrosine intermediate is the Tyr-228.

The protein belongs to the 'phage' integrase family.

This resolvase acts at the RfsF equivalent resolution sequence of pColBM-CL139. This Escherichia coli protein is Resolvase (resD).